We begin with the raw amino-acid sequence, 129 residues long: DNA-directed RNA polymerase II subunit RPB9 (129 aa).

8 residues coordinate Zn(2+): Cys-21, Cys-24, Cys-43, Cys-46, Cys-90, Cys-93, Cys-118, and Cys-123. The C4-type zinc-finger motif lies at Cys-21–Cys-46. A TFIIS-type zinc finger spans residues Glu-86–Thr-128.

It belongs to the archaeal RpoM/eukaryotic RPA12/RPB9/RPC11 RNA polymerase family. As to quaternary structure, component of the RNA polymerase II (Pol II) complex consisting of 12 subunits.

It is found in the nucleus. Its subcellular location is the nucleolus. In terms of biological role, DNA-dependent RNA polymerase catalyzes the transcription of DNA into RNA using the four ribonucleoside triphosphates as substrates. Component of RNA polymerase II which synthesizes mRNA precursors and many functional non-coding RNAs. Pol II is the central component of the basal RNA polymerase II transcription machinery. It is composed of mobile elements that move relative to each other. RPB9 is part of the upper jaw surrounding the central large cleft and thought to grab the incoming DNA template. This chain is DNA-directed RNA polymerase II subunit RPB9, found in Drosophila melanogaster (Fruit fly).